A 546-amino-acid chain; its full sequence is SusD-like protein BACOVA_02651 (546 aa).

A signal peptide spans 1–21; it reads MRIFMKSKLLVIATTALLFAA. C22 carries the N-palmitoyl cysteine lipid modification. C22 is lipidated: S-diacylglycerol cysteine.

Belongs to the SusD family.

The protein localises to the cell outer membrane. The protein operates within glucan metabolism; xyloglucan degradation. In terms of biological role, polysaccharide-binding protein present at the surface of the cell. Probably mediates xyloglucan-binding before xyloglucan transport in the periplasm for degradation. This is SusD-like protein BACOVA_02651 from Bacteroides ovatus (strain ATCC 8483 / DSM 1896 / JCM 5824 / BCRC 10623 / CCUG 4943 / NCTC 11153).